We begin with the raw amino-acid sequence, 297 residues long: Adrenocorticotropic hormone receptor (297 aa).

At 1-23 (MKHIITPYEHTNDTARNNSDCPD) the chain is on the extracellular side. N-linked (GlcNAc...) asparagine glycosylation is found at asparagine 12 and asparagine 17. 2 cysteine pairs are disulfide-bonded: cysteine 21-cysteine 253 and cysteine 245-cysteine 251. The chain crosses the membrane as a helical span at residues 24–49 (VVLPEEIFFTISIIGVLENLIVLLAV). Residues 50 to 58 (VKNKNLQCP) lie on the Cytoplasmic side of the membrane. A helical membrane pass occupies residues 59–79 (MYFFICSLAISDMLGSLYKIL). Residues 80 to 104 (ENILIMFRNRGYLQPRGNFESTADD) lie on the Extracellular side of the membrane. A helical membrane pass occupies residues 105–126 (IIDCMFILSLLGSIFSLSVIAA). Topologically, residues 127–147 (DRYITIFHALQYHSIVTMRRT) are cytoplasmic. Residues 148 to 168 (IITLTVIWIFCTGSGIAMVIF) form a helical membrane-spanning segment. The Extracellular segment spans residues 169–180 (SHHVPTVLTFTS). Residues 181–199 (LFPLMLVFILCLYIHMFLL) form a helical membrane-spanning segment. Residues 200–217 (ARSHARKISTLPRANMKG) are Cytoplasmic-facing. The chain crosses the membrane as a helical span at residues 218 to 244 (AITLTILLGVFIFCWAPFILHVLLMTF). The Extracellular portion of the chain corresponds to 245–256 (CPNNPYCVCYMS). A helical transmembrane segment spans residues 257-278 (LFQINGMLIMCNAVIDPFIYAF). Topologically, residues 279-297 (RSPELRDAFKKMFSCHRYQ) are cytoplasmic. Residue cysteine 293 is the site of S-palmitoyl cysteine attachment.

The protein belongs to the G-protein coupled receptor 1 family. Homodimer. Interacts with corticotropin (ACTH). Interacts with MRAP; this interaction targets MC2R to the plasma membrane. Interacts with MRAP2; competing with MRAP for binding to MC2R and impairing the binding of corticotropin (ACTH). Post-translationally, ubiquitinated by MGRN1 that may be involved in post-endocytic trafficking and/or degradation of internalized receptor.

The protein localises to the cell membrane. Functionally, hormone receptor primarily expressed in adrenal cortex that plays a key role in regulating adrenocortical function. Upon corticotropin (ACTH) binding, facilitates the release of adrenal glucocorticoids, including cortisol and corticosterone. In addition, MC2R is required for fetal and neonatal adrenal gland development. Mechanistically, activates adenylate cyclase (cAMP), the MAPK cascade as well as the cAMP-dependent protein kinase A pathway leading to steroidogenic factor 1/NR5A1-mediated transcriptional activation. The polypeptide is Adrenocorticotropic hormone receptor (MC2R) (Mesocricetus auratus (Golden hamster)).